Consider the following 125-residue polypeptide: Large ribosomal subunit protein bL12 (125 aa).

It belongs to the bacterial ribosomal protein bL12 family. In terms of assembly, homodimer. Part of the ribosomal stalk of the 50S ribosomal subunit. Forms a multimeric L10(L12)X complex, where L10 forms an elongated spine to which 2 to 4 L12 dimers bind in a sequential fashion. Binds GTP-bound translation factors.

Its function is as follows. Forms part of the ribosomal stalk which helps the ribosome interact with GTP-bound translation factors. Is thus essential for accurate translation. This Nitrobacter winogradskyi (strain ATCC 25391 / DSM 10237 / CIP 104748 / NCIMB 11846 / Nb-255) protein is Large ribosomal subunit protein bL12.